The sequence spans 340 residues: HTH-type transcriptional regulator PtxS (340 aa).

Residues valine 12–arginine 67 enclose the HTH lacI-type domain. A DNA-binding region (H-T-H motif) is located at residues isoleucine 14–glycine 33.

In terms of assembly, interacts with PtxR in the absence of 2-ketogluconate. Binding of the 2-ketogluconate effector to PtxS causes PtxS/PtxR complex dissociation.

2-ketogluconate acts as a molecular effector and causes dissociation of the PtxS/PtxR complex. Functionally, negatively regulates glucose metabolism by binding directly to the promoter region of the kgu and gad operons. It also negatively regulates its own synthesis. In terms of biological role, in addition, in pathogenic strains, PtxS modulates PtxR activity in response to 2-ketogluconate. In the presence of PtxR, which also binds to the kgu and gad promoter regions, PtxS and PtxR form a tight complex, creating a DNA-loop that prevents RNA polymerase promoter access and expression of the glucose metabolism genes. Binding of the 2-ketogluconate effector to PtxS causes PtxS/PtxR complex dissociation and leads to the dissolution of the repression DNA-loop, facilitating the entry of the RNA polymerase and enabling the transcription of the genes. Also plays an important role in the regulation of the expression of the virulence factor exotoxin A (toxA). PtxS does not bind directly to the toxA promoter but negatively regulates the production of exotoxin A by binding to PtxR and interfering with its positive regulator activity. In the presence of 2-ketogluconate, PtxS is released and PtxR can recruit RNA polymerase. The polypeptide is HTH-type transcriptional regulator PtxS (Pseudomonas aeruginosa (strain ATCC 15692 / DSM 22644 / CIP 104116 / JCM 14847 / LMG 12228 / 1C / PRS 101 / PAO1)).